Here is a 144-residue protein sequence, read N- to C-terminus: Cytochrome c-type biogenesis protein CcmE (144 aa).

At 1–7 (MKPRHKR) the chain is on the cytoplasmic side. The helical; Signal-anchor for type II membrane protein transmembrane segment at 8–28 (ALMIVAALAVIGIAALLILNA) threads the bilayer. The Extracellular segment spans residues 29–144 (LNSNIALYVT…EQAQKNGSAK (116 aa)). Heme is bound by residues His-121 and Tyr-125.

Belongs to the CcmE/CycJ family.

Its subcellular location is the cell membrane. Functionally, heme chaperone required for the biogenesis of c-type cytochromes. Transiently binds heme delivered by CcmC and transfers the heme to apo-cytochromes in a process facilitated by CcmF and CcmH. This chain is Cytochrome c-type biogenesis protein CcmE, found in Polynucleobacter asymbioticus (strain DSM 18221 / CIP 109841 / QLW-P1DMWA-1) (Polynucleobacter necessarius subsp. asymbioticus).